We begin with the raw amino-acid sequence, 578 residues long: Isocitrate dehydrogenase kinase/phosphatase (578 aa).

Residues 315 to 321 (APGIRGM) and K336 contribute to the ATP site. D371 is an active-site residue.

This sequence belongs to the AceK family.

Its subcellular location is the cytoplasm. The enzyme catalyses L-seryl-[isocitrate dehydrogenase] + ATP = O-phospho-L-seryl-[isocitrate dehydrogenase] + ADP + H(+). In terms of biological role, bifunctional enzyme which can phosphorylate or dephosphorylate isocitrate dehydrogenase (IDH) on a specific serine residue. This is a regulatory mechanism which enables bacteria to bypass the Krebs cycle via the glyoxylate shunt in response to the source of carbon. When bacteria are grown on glucose, IDH is fully active and unphosphorylated, but when grown on acetate or ethanol, the activity of IDH declines drastically concomitant with its phosphorylation. The chain is Isocitrate dehydrogenase kinase/phosphatase from Shigella boydii serotype 18 (strain CDC 3083-94 / BS512).